A 565-amino-acid polypeptide reads, in one-letter code: Ubiquitin carboxyl-terminal hydrolase 39 (565 aa).

Composition is skewed to basic and acidic residues over residues 1 to 21 (MSGR…ESES) and 28 to 39 (VKRERDREREPE). 2 disordered regions span residues 1 to 61 (MSGR…SARE) and 75 to 95 (EREV…NGRV). Ser46 carries the phosphoserine modification. A Glycyl lysine isopeptide (Lys-Gly) (interchain with G-Cter in SUMO2) cross-link involves residue Lys51. Position 82 is a phosphoserine (Ser82). Residues 85-95 (EREVRAKNGRV) show a composition bias toward basic and acidic residues. Residues 103 to 200 (RHCPYLDTIN…YVLKPTFTKQ (98 aa)) form a UBP-type; degenerate zinc finger. 4 residues coordinate Zn(2+): Cys136, Cys139, His155, and His161. Residues 225–555 (VGLNNIKAND…EAYIQIWKRR (331 aa)) form the USP domain.

Belongs to the peptidase C19 family. As to quaternary structure, the U4/U6-U5 tri-snRNP complex is a building block of the precatalytic spliceosome (spliceosome B complex). Component of the U4/U6-U5 tri-snRNP complex composed of the U4, U6 and U5 snRNAs and at least PRPF3, PRPF4, PRPF6, PRPF8, PRPF31, SNRNP200, TXNL4A, SNRNP40, SNRPB, SNRPD1, SNRPD2, SNRPD3, SNRPE, SNRPF, SNRPG, DDX23, CD2BP2, PPIH, SNU13, EFTUD2, SART1 and USP39, plus LSM2, LSM3, LSM4, LSM5, LSM6, LSM7 and LSM8.

The protein localises to the nucleus. It catalyses the reaction Thiol-dependent hydrolysis of ester, thioester, amide, peptide and isopeptide bonds formed by the C-terminal Gly of ubiquitin (a 76-residue protein attached to proteins as an intracellular targeting signal).. Its function is as follows. Deubiquitinating enzyme that plays a role in many cellular processes including cellular antiviral response, epithelial morphogenesis, DNA repair or B-cell development. Plays a role in pre-mRNA splicing as a component of the U4/U6-U5 tri-snRNP, one of the building blocks of the precatalytic spliceosome. Specifically regulates immunoglobulin gene rearrangement in a spliceosome-dependent manner, which involves modulating chromatin interactions at the Igh locus and therefore plays an essential role in B-cell development. Regulates AURKB mRNA levels, and thereby plays a role in cytokinesis and in the spindle checkpoint. Regulates apoptosis and G2/M cell cycle checkpoint in response to DNA damage by deubiquitinating and stabilizing CHK2. Also plays an important role in DNA repair by controlling the recruitment of XRCC4/LIG4 to DNA double-strand breaks for non-homologous end-joining repair. Participates in antiviral activity by affecting the type I IFN signaling by stabilizing STAT1 and decreasing its 'Lys-6'-linked ubiquitination. Contributes to non-canonical Wnt signaling during epidermal differentiation. Acts as a negative regulator NF-kappa-B activation through deubiquitination of 'Lys-48'-linked ubiquitination of NFKBIA. This Homo sapiens (Human) protein is Ubiquitin carboxyl-terminal hydrolase 39.